Here is a 60-residue protein sequence, read N- to C-terminus: Temporin-CG2 (60 aa).

The N-terminal stretch at 1-22 (MFTLKKPLLVLFFLATINLSLC) is a signal peptide. Residues 23–43 (EQERNAEEERRDDDERNVEVE) constitute a propeptide, removed in mature form.

As to expression, expressed by the skin glands.

The protein resides in the secreted. Functionally, antimicrobial peptide active against a variety of Gram-positive bacterial strains but not against Gram-negative bacteria. Has weak antifungal activity against a slime mold isolate. Has weak hemolytic activity against human erythrocytes. In Amolops chunganensis (Chungan torrent frog), this protein is Temporin-CG2.